A 562-amino-acid chain; its full sequence is Sulfite reductase [NADPH] hemoprotein beta-component (562 aa).

[4Fe-4S] cluster is bound by residues Cys-428, Cys-434, Cys-473, and Cys-477. Cys-477 contributes to the siroheme binding site.

Belongs to the nitrite and sulfite reductase 4Fe-4S domain family. In terms of assembly, alpha(8)-beta(8). The alpha component is a flavoprotein, the beta component is a hemoprotein. Requires siroheme as cofactor. [4Fe-4S] cluster serves as cofactor.

The catalysed reaction is hydrogen sulfide + 3 NADP(+) + 3 H2O = sulfite + 3 NADPH + 4 H(+). It functions in the pathway sulfur metabolism; hydrogen sulfide biosynthesis; hydrogen sulfide from sulfite (NADPH route): step 1/1. Its function is as follows. Component of the sulfite reductase complex that catalyzes the 6-electron reduction of sulfite to sulfide. This is one of several activities required for the biosynthesis of L-cysteine from sulfate. This chain is Sulfite reductase [NADPH] hemoprotein beta-component, found in Myxococcus xanthus (strain DK1622).